The primary structure comprises 218 residues: 7-cyano-7-deazaguanine synthase (218 aa).

10–20 (FSGGQDSTTCL) contributes to the ATP binding site. Residues Cys186, Cys195, Cys198, and Cys201 each coordinate Zn(2+).

It belongs to the QueC family. Homodimer. Requires Zn(2+) as cofactor.

The enzyme catalyses 7-carboxy-7-deazaguanine + NH4(+) + ATP = 7-cyano-7-deazaguanine + ADP + phosphate + H2O + H(+). Its pathway is purine metabolism; 7-cyano-7-deazaguanine biosynthesis. Functionally, catalyzes the ATP-dependent conversion of 7-carboxy-7-deazaguanine (CDG) to 7-cyano-7-deazaguanine (preQ(0)). The chain is 7-cyano-7-deazaguanine synthase from Exiguobacterium sibiricum (strain DSM 17290 / CCUG 55495 / CIP 109462 / JCM 13490 / 255-15).